A 142-amino-acid chain; its full sequence is uncharacterized protein (142 aa).

Belongs to the IIV-6 115R family.

This is an uncharacterized protein from Invertebrate iridescent virus 3 (IIV-3).